A 293-amino-acid polypeptide reads, in one-letter code: Phycoerythrin class 2 subunit gamma, linker polypeptide (293 aa).

Position 49 (C49) interacts with phycourobilin. The 180-residue stretch at 50–229 folds into the PBS-linker domain; the sequence is AAMGIGIGPR…LGGMKVAISD (180 aa).

Post-translationally, contains one covalently linked phycourobilin chromophore.

It localises to the cellular thylakoid membrane. Its function is as follows. This protein is a bile pigment-bearing rod linker polypeptide that associates with C-phycoerythrin. The polypeptide is Phycoerythrin class 2 subunit gamma, linker polypeptide (mpeC) (Synechococcus sp. (strain WH8020)).